We begin with the raw amino-acid sequence, 863 residues long: Neuroligin-1 (863 aa).

Positions 1 to 45 (MALPRCTWPNYVWRAVMACLVHRGLGAPLTLCMLGCLLQAGHVLS) are cleaved as a signal peptide. Over 46-717 (QKLDDVDPLV…DQRDYSTELS (672 aa)) the chain is Extracellular. N-linked (GlcNAc...) (complex) asparagine glycosylation is present at Asn109. The cysteines at positions 117 and 153 are disulfide-linked. Positions 183–212 (KGGPLTKKQTDDLGDNDGAEDEDIRDSGGP) are disordered. A compositionally biased stretch (acidic residues) spans 194-206 (DLGDNDGAEDEDI). N-linked (GlcNAc...) (complex) asparagine glycosylation is found at Asn323 and Asn363. Cystine bridges form between Cys362–Cys373 and Cys532–Cys566. N-linked (GlcNAc...) asparagine glycosylation occurs at Asn567. The tract at residues 670–708 (PSTDITFRPTRKNSVPVTSAFPTAKQDDPKQQPSPFSVD) is disordered. The span at 681 to 690 (KNSVPVTSAF) shows a compositional bias: polar residues. Residues Ser703 and Ser706 are each glycosylated (O-linked (GalNAc...) serine). Residues 718 to 738 (VTIAVGASLLFLNILAFAALY) traverse the membrane as a helical segment. Residues 739–863 (YKKDKRRHDV…HPHSHSTTRV (125 aa)) lie on the Cytoplasmic side of the membrane. The tract at residues 842–863 (GGQNNTLPHPHPHPHSHSTTRV) is disordered. Residues 851–863 (PHPHPHSHSTTRV) are compositionally biased toward basic residues.

The protein belongs to the type-B carboxylesterase/lipase family. Interacts with neurexins NRXN1, NRXN2 and NRXN3. Interaction with neurexins is mediated by heparan sulfate glycan modification on neurexin. Interacts with NLGN3. Interacts with AIP1 and PDZRN3. Interacts (via its C-terminus) with DLG4/PSD-95 (via PDZ domain 3). Interacts with GOPC. As to expression, expressed in the blood vessel walls (at protein level). Highly expressed in brain through prenatal stages, and at lower levels in pancreas islet beta cells.

It localises to the cell membrane. The protein localises to the postsynaptic density. It is found in the synaptic cleft. The protein resides in the synaptic cell membrane. Cell surface protein involved in cell-cell-interactions via its interactions with neurexin family members. Plays a role in synapse function and synaptic signal transmission, and probably mediates its effects by recruiting and clustering other synaptic proteins. May promote the initial formation of synapses, but is not essential for this. In vitro, triggers the de novo formation of presynaptic structures. May be involved in specification of excitatory synapses. Required to maintain wakefulness quality and normal synchrony of cerebral cortex activity during wakefulness and sleep. The protein is involved in nervous system development. In Homo sapiens (Human), this protein is Neuroligin-1 (NLGN1).